The following is a 137-amino-acid chain: MLVVLLTAALLALSSAQNTDEEVSNAEISDVKQQPDSDSDLPSDDVNPGNVQDHESAPAANEEPSVSPGNEQEEQQQQPLPVENQEPSDKERHRKQKRPPPETLHHRENLRPQIYRQFGIRPFGSLFPEPYRFQPWA.

Residues 1-18 (MLVVLLTAALLALSSAQN) form the signal peptide. Residues 14-113 (SSAQNTDEEV…LHHRENLRPQ (100 aa)) form a disordered region. Residues 75-85 (QQQQPLPVENQ) are compositionally biased toward low complexity. Basic and acidic residues predominate over residues 99-110 (PPPETLHHRENL).

The protein resides in the secreted. Its function is as follows. Unknown, male-specific function. The chain is SMR2 protein (Smr2) from Rattus norvegicus (Rat).